The sequence spans 64 residues: Small ribosomal subunit protein bS21 (64 aa).

It belongs to the bacterial ribosomal protein bS21 family.

In Anaeromyxobacter dehalogenans (strain 2CP-1 / ATCC BAA-258), this protein is Small ribosomal subunit protein bS21.